The following is a 322-amino-acid chain: Beta-ketoacyl-[acyl-carrier-protein] synthase III (322 aa).

Active-site residues include cysteine 113 and histidine 249. Residues 250–254 (QANVR) form an ACP-binding region. The active site involves asparagine 279.

It belongs to the thiolase-like superfamily. FabH family. In terms of assembly, homodimer.

Its subcellular location is the cytoplasm. The catalysed reaction is malonyl-[ACP] + acetyl-CoA + H(+) = 3-oxobutanoyl-[ACP] + CO2 + CoA. The protein operates within lipid metabolism; fatty acid biosynthesis. Functionally, catalyzes the condensation reaction of fatty acid synthesis by the addition to an acyl acceptor of two carbons from malonyl-ACP. Catalyzes the first condensation reaction which initiates fatty acid synthesis and may therefore play a role in governing the total rate of fatty acid production. Possesses both acetoacetyl-ACP synthase and acetyl transacylase activities. Its substrate specificity determines the biosynthesis of branched-chain and/or straight-chain of fatty acids. This is Beta-ketoacyl-[acyl-carrier-protein] synthase III from Anaplasma marginale (strain St. Maries).